The primary structure comprises 228 residues: Octanoyltransferase (228 aa).

The 184-residue stretch at 30-213 folds into the BPL/LPL catalytic domain; that stretch reads NKVEDIMLLL…YFSRVFDFEP (184 aa). Substrate is bound by residues 75–82, 143–145, and 156–158; these read RGGDVTYH, AIG, and GFA. The Acyl-thioester intermediate role is filled by C174.

This sequence belongs to the LipB family.

The protein resides in the cytoplasm. The enzyme catalyses octanoyl-[ACP] + L-lysyl-[protein] = N(6)-octanoyl-L-lysyl-[protein] + holo-[ACP] + H(+). It participates in protein modification; protein lipoylation via endogenous pathway; protein N(6)-(lipoyl)lysine from octanoyl-[acyl-carrier-protein]: step 1/2. In terms of biological role, catalyzes the transfer of endogenously produced octanoic acid from octanoyl-acyl-carrier-protein onto the lipoyl domains of lipoate-dependent enzymes. Lipoyl-ACP can also act as a substrate although octanoyl-ACP is likely to be the physiological substrate. This is Octanoyltransferase from Desulforamulus reducens (strain ATCC BAA-1160 / DSM 100696 / MI-1) (Desulfotomaculum reducens).